Here is an 82-residue protein sequence, read N- to C-terminus: UPF0337 protein PP_2059 (82 aa).

This sequence belongs to the UPF0337 (CsbD) family.

The protein is UPF0337 protein PP_2059 of Pseudomonas putida (strain ATCC 47054 / DSM 6125 / CFBP 8728 / NCIMB 11950 / KT2440).